The following is a 115-amino-acid chain: Biotrophy-associated secreted protein 1 (115 aa).

The signal sequence occupies residues 1 to 22; sequence MHVFNFAALFTVLATFTATAAA. The tract at residues 24–115 is disordered; that stretch reads DQGSNTFDQR…GIRRVENYYP (92 aa). Basic and acidic residues-rich tracts occupy residues 46 to 55 and 91 to 115; these read IREEKQENVG and QQKERAERKQDRGLNGIRRVENYYP.

It is found in the secreted. It localises to the host cytoplasm. Functionally, secreted effector involved in biotrophic colonization of plant cells. Induces an early, basal defense response in susceptible rice, including rapid callose deposition and ROS production in leaves and calli. Also promotes sporulation and mycelia growth suggesting a role across the whole process of interaction, from the biotrophic phase to sporulation. This chain is Biotrophy-associated secreted protein 1, found in Pyricularia oryzae (strain 70-15 / ATCC MYA-4617 / FGSC 8958) (Rice blast fungus).